The sequence spans 494 residues: Alpha-amylase-related protein (494 aa).

The first 20 residues, 1 to 20, serve as a signal peptide directing secretion; it reads MIKFALALTLCLAGASLSLA. Q21 carries the pyrrolidone carboxylic acid modification. C48 and C104 form a disulfide bridge. Residues N118, Q169, and D178 each contribute to the Ca(2+) site. Cysteines 157 and 171 form a disulfide. R206 is a chloride binding site. D208 acts as the Nucleophile in catalysis. H212 serves as a coordination point for Ca(2+). E245 (proton donor) is an active-site residue. The chloride site is built by N308 and R343. Cystine bridges form between C376/C382, C418/C441, and C448/C460.

Belongs to the glycosyl hydrolase 13 family. Monomer. Ca(2+) serves as cofactor. The cofactor is chloride.

It is found in the secreted. It carries out the reaction Endohydrolysis of (1-&gt;4)-alpha-D-glucosidic linkages in polysaccharides containing three or more (1-&gt;4)-alpha-linked D-glucose units.. The polypeptide is Alpha-amylase-related protein (Amyrel) (Drosophila kikkawai (Fruit fly)).